Reading from the N-terminus, the 149-residue chain is Putative sugar phosphate isomerase YwlF (149 aa).

His-9 provides a ligand contact to substrate. Residue Cys-66 is the Proton acceptor of the active site. Gly-67–Met-72 lines the substrate pocket. His-99 acts as the Proton donor in catalysis. A substrate-binding site is contributed by Arg-133.

The protein belongs to the LacAB/RpiB family.

The protein is Putative sugar phosphate isomerase YwlF (ywlF) of Bacillus subtilis (strain 168).